A 302-amino-acid chain; its full sequence is 33 kDa chaperonin (302 aa).

Disulfide bonds link Cys-234–Cys-236 and Cys-267–Cys-270.

The protein belongs to the HSP33 family. Under oxidizing conditions two disulfide bonds are formed involving the reactive cysteines. Under reducing conditions zinc is bound to the reactive cysteines and the protein is inactive.

The protein localises to the cytoplasm. Its function is as follows. Redox regulated molecular chaperone. Protects both thermally unfolding and oxidatively damaged proteins from irreversible aggregation. Plays an important role in the bacterial defense system toward oxidative stress. The chain is 33 kDa chaperonin from Neisseria gonorrhoeae (strain NCCP11945).